The chain runs to 647 residues: Nucleoside triphosphatase I (647 aa).

The region spanning 48–213 (FIGLSELNSL…KYLINLLRPK (166 aa)) is the Helicase ATP-binding domain. 61–68 (WDTGYGKT) contributes to the ATP binding site. The DEXH box signature appears at 150–153 (DEVH). One can recognise a Helicase C-terminal domain in the interval 377–540 (YIEACKIILN…KINVLNSFMK (164 aa)). Residues 466-532 (DIIILDLPWK…DLIKSKQDKI (67 aa)) form a binding to the cap-specific mRNA (nucleoside-2'-O-)-methyltransferase region.

It belongs to the helicase family. NPH I subfamily. As to quaternary structure, monomer. Interacts (via C-terminus) with RAP94 (via N-terminus). Interacts with the cap-specific mRNA (nucleoside-2'-O-)-methyltransferase.

It is found in the virion. The catalysed reaction is a ribonucleoside 5'-triphosphate + H2O = a ribonucleoside 5'-diphosphate + phosphate + H(+). Its function is as follows. DNA-dependent ATPase required for providing the needed energy to achieve the termination of early transcripts. Acts in concert with the RAP94 subunit of the virion RNA polymerase and the capping enzyme/VTF to catalyze release of UUUUUNU-containing nascent RNA from the elongation complex. NPH-I must bind ssDNA in order to exhibit ATPase activity. The polypeptide is Nucleoside triphosphatase I (NPH1) (Melanoplus sanguinipes entomopoxvirus (MsEPV)).